Here is a 263-residue protein sequence, read N- to C-terminus: MEMKKRISLELRNRSPAEVAELVLDNCRSVDGEIEGLNDSYKELEFLSMANVELKSLSKLPKLPKLRKLELSDNSISGGLDVLTERCPNITYLNLSGNKIKDLSTVEALASLKNLKSLDLFNCEITNLEDYRENIFQRLSQITYLDGFDQEDNEAPDSEEDDDDDDYDDDEEPGPRRYEAEEDEEDEESASDLGEEEEEEEEVGLSYLMKEEIRDEEDDDDYVEDGAEGEEEEEEDEEDEAAAADQGEKRKRDPEDEGDEDED.

3 LRR repeats span residues 43-64 (ELEFLSMANVELKSLSKLPKLP), 65-84 (KLRKLELSDNSISGGLDVLT), and 89-110 (NITYLNLSGNKIKDLSTVEALA). The region spanning 123-161 (CEITNLEDYRENIFQRLSQITYLDGFDQEDNEAPDSEED) is the LRRCT domain. Residues 146–263 (DGFDQEDNEA…PEDEGDEDED (118 aa)) are disordered. Acidic residues-rich tracts occupy residues 148-172 (FDQEDNEAPDSEEDDDDDDYDDDEE), 180-203 (AEEDEEDEESASDLGEEEEEEEEV), and 214-242 (RDEEDDDDYVEDGAEGEEEEEEDEEDEAA). The interval 202–263 (EVGLSYLMKE…PEDEGDEDED (62 aa)) is ZID domain.

It belongs to the ANP32 family. As to quaternary structure, component of a SWR1-like complex. Interacts with H2A.Z/H2AZ1. Phosphorylated. The phosphorylation is nuclear localization signal (NLS)-dependent.

It localises to the cytoplasm. The protein resides in the nucleus. Its function is as follows. Histone chaperone that specifically mediates the genome-wide removal of histone H2A.Z/H2AZ1 from the nucleosome: removes H2A.Z/H2AZ1 from its normal sites of deposition, especially from enhancer and insulator regions. Not involved in deposition of H2A.Z/H2AZ1 in the nucleosome. May stabilize the evicted H2A.Z/H2AZ1-H2B dimer, thus shifting the equilibrium towards dissociation and the off-chromatin state. Inhibits activity of protein phosphatase 2A (PP2A). Does not inhibit protein phosphatase 1. May play a role in cerebellar development and synaptogenesis. The polypeptide is Acidic leucine-rich nuclear phosphoprotein 32 family member E (anp32e) (Xenopus laevis (African clawed frog)).